The sequence spans 163 residues: Beta-lactoglobulin-2 (163 aa).

2 cysteine pairs are disulfide-bonded: cysteine 66/cysteine 161 and cysteine 106/cysteine 120.

Belongs to the calycin superfamily. Lipocalin family. In terms of assembly, monomer.

It is found in the secreted. Its function is as follows. Lactoglobulin is the primary component of whey, it binds retinol and is probably involved in the transport of that molecule. The protein is Beta-lactoglobulin-2 (LGB2) of Equus asinus (Donkey).